The sequence spans 66 residues: ATP synthase F(0) complex subunit 8 (66 aa).

Residues T8–F24 traverse the membrane as a helical segment. K54 carries the post-translational modification N6-acetyllysine; alternate. N6-succinyllysine; alternate is present on K54. N6-acetyllysine is present on K57.

This sequence belongs to the ATPase protein 8 family. In terms of assembly, component of the ATP synthase complex composed at least of ATP5F1A/subunit alpha, ATP5F1B/subunit beta, ATP5MC1/subunit c (homooctomer), MT-ATP6/subunit a, MT-ATP8/subunit 8, ATP5ME/subunit e, ATP5MF/subunit f, ATP5MG/subunit g, ATP5MK/subunit k, ATP5MJ/subunit j, ATP5F1C/subunit gamma, ATP5F1D/subunit delta, ATP5F1E/subunit epsilon, ATP5PF/subunit F6, ATP5PB/subunit b, ATP5PD/subunit d, ATP5PO/subunit OSCP. ATP synthase complex consists of a soluble F(1) head domain (subunits alpha(3) and beta(3)) - the catalytic core - and a membrane F(0) domain - the membrane proton channel (subunits c, a, 8, e, f, g, k and j). These two domains are linked by a central stalk (subunits gamma, delta, and epsilon) rotating inside the F1 region and a stationary peripheral stalk (subunits F6, b, d, and OSCP). Interacts with PRICKLE3.

The protein localises to the mitochondrion membrane. Subunit 8, of the mitochondrial membrane ATP synthase complex (F(1)F(0) ATP synthase or Complex V) that produces ATP from ADP in the presence of a proton gradient across the membrane which is generated by electron transport complexes of the respiratory chain. ATP synthase complex consist of a soluble F(1) head domain - the catalytic core - and a membrane F(1) domain - the membrane proton channel. These two domains are linked by a central stalk rotating inside the F(1) region and a stationary peripheral stalk. During catalysis, ATP synthesis in the catalytic domain of F(1) is coupled via a rotary mechanism of the central stalk subunits to proton translocation. In vivo, can only synthesize ATP although its ATP hydrolase activity can be activated artificially in vitro. Part of the complex F(0) domain. The sequence is that of ATP synthase F(0) complex subunit 8 from Ovis aries (Sheep).